Consider the following 417-residue polypeptide: MLEQMGKAAREAAWQLAQLSTKQKNQALIRIADLLEQESAIILEANQLDMIQAREQGMSEALLDRLLLTPERLTAIAHDVRQVCGLSDPVGEVIDGSLLDSGLRLERRRVPLGVVGVIYEARPNVTIDVASLCLKTGNAVILRGGKETHNTNQATVKVIQQALEQSGLPAAAVQAIDKPDRELVIQLLKLDRYVDMLIPRGGAGLHKLCREQSTIPVITGGIGVCHTFVDESADFDKALTVITNAKVQRPSACNALETLLVHQKIAADFLPALSKYMEEQGVTLHASKSAMVFLKDGAAKVVDVTEADYRDEWLSLDMNVEIVSDMEQAIDHIRTYGTSHSDAILTQSLHNADYFVRQVDSAAVYVNASTRFTDGGQFGLGAEVAVSTQKLHSRGPMGLDALTTYKWIGYGEDLVRK.

This sequence belongs to the gamma-glutamyl phosphate reductase family.

Its subcellular location is the cytoplasm. The catalysed reaction is L-glutamate 5-semialdehyde + phosphate + NADP(+) = L-glutamyl 5-phosphate + NADPH + H(+). It participates in amino-acid biosynthesis; L-proline biosynthesis; L-glutamate 5-semialdehyde from L-glutamate: step 2/2. In terms of biological role, catalyzes the NADPH-dependent reduction of L-glutamate 5-phosphate into L-glutamate 5-semialdehyde and phosphate. The product spontaneously undergoes cyclization to form 1-pyrroline-5-carboxylate. This Photorhabdus laumondii subsp. laumondii (strain DSM 15139 / CIP 105565 / TT01) (Photorhabdus luminescens subsp. laumondii) protein is Gamma-glutamyl phosphate reductase.